Here is a 126-residue protein sequence, read N- to C-terminus: Small ribosomal subunit protein uS13 (126 aa).

A disordered region spans residues 95–126 (GLPVRGQRTHTNARTRKGPRKTVAGKKKPGKK).

Belongs to the universal ribosomal protein uS13 family. Part of the 30S ribosomal subunit. Forms a loose heterodimer with protein S19. Forms two bridges to the 50S subunit in the 70S ribosome.

Functionally, located at the top of the head of the 30S subunit, it contacts several helices of the 16S rRNA. In the 70S ribosome it contacts the 23S rRNA (bridge B1a) and protein L5 of the 50S subunit (bridge B1b), connecting the 2 subunits; these bridges are implicated in subunit movement. Contacts the tRNAs in the A and P-sites. The chain is Small ribosomal subunit protein uS13 from Acidothermus cellulolyticus (strain ATCC 43068 / DSM 8971 / 11B).